We begin with the raw amino-acid sequence, 155 residues long: Small ribosomal subunit protein uS7c (155 aa).

The protein belongs to the universal ribosomal protein uS7 family. As to quaternary structure, part of the 30S ribosomal subunit.

Its subcellular location is the plastid. It localises to the chloroplast. One of the primary rRNA binding proteins, it binds directly to 16S rRNA where it nucleates assembly of the head domain of the 30S subunit. The chain is Small ribosomal subunit protein uS7c (rps7) from Saururus cernuus (Lizard's tail).